We begin with the raw amino-acid sequence, 207 residues long: uncharacterized protein (207 aa).

The 188-residue stretch at alanine 14–glycine 201 folds into the YrdC-like domain.

It belongs to the SUA5 family.

This is an uncharacterized protein from Haemophilus influenzae (strain ATCC 51907 / DSM 11121 / KW20 / Rd).